Here is a 614-residue protein sequence, read N- to C-terminus: UDP-sugar pyrophosphorylase (614 aa).

The residue at position 2 (Ala-2) is an N-acetylalanine.

This sequence belongs to the USP family. Mg(2+) is required as a cofactor. The cofactor is Mn(2+). Ubiquitous, but most abundant in rosette leaves, inflorescences, stems, stamens and pollen.

The enzyme catalyses a monosaccharide 1-phosphate + UTP + H(+) = a UDP-monosaccharide + diphosphate. Functionally, required for the synthesis of the intine, the pectocellulosic inner wall of developing pollen. May function as the terminal enzyme of the myo-inositol oxidation (MIO) pathway. May also play a role in the salvage pathway for synthesis of nucleotide sugars. Can use a wide range of substrates including glucose-1-phosphate, galactose-1-phosphate, xylose-1-phosphate, arabinose-1-phosphate and glucuronate-1-phosphate. In Arabidopsis thaliana (Mouse-ear cress), this protein is UDP-sugar pyrophosphorylase (USP).